A 262-amino-acid chain; its full sequence is Regulatory protein RecX (262 aa).

This sequence belongs to the RecX family.

Its subcellular location is the cytoplasm. Its function is as follows. Modulates RecA activity. This chain is Regulatory protein RecX, found in Photobacterium profundum (strain SS9).